Consider the following 534-residue polypeptide: CTP synthase (534 aa).

Residues 1 to 265 (MKYIIVTGGV…SNYLLKKLIL (265 aa)) are amidoligase domain. Residue Ser12 participates in CTP binding. Ser12 provides a ligand contact to UTP. Residue 13-18 (GLGKGI) coordinates ATP. Residue Tyr53 participates in L-glutamine binding. Asp70 serves as a coordination point for ATP. The Mg(2+) site is built by Asp70 and Glu140. CTP is bound by residues 147-149 (DIE), 186-191 (KTKPTQ), and Lys222. UTP-binding positions include 186 to 191 (KTKPTQ) and Lys222. The 242-residue stretch at 289 to 530 (NVAIVGKYTH…MGAMLKKSKE (242 aa)) folds into the Glutamine amidotransferase type-1 domain. L-glutamine is bound at residue Gly352. Cys379 serves as the catalytic Nucleophile; for glutamine hydrolysis. Residues 380–383 (LGMQ), Glu403, and Arg460 each bind L-glutamine. Residues His503 and Glu505 contribute to the active site.

Belongs to the CTP synthase family. In terms of assembly, homotetramer.

The catalysed reaction is UTP + L-glutamine + ATP + H2O = CTP + L-glutamate + ADP + phosphate + 2 H(+). The enzyme catalyses L-glutamine + H2O = L-glutamate + NH4(+). It catalyses the reaction UTP + NH4(+) + ATP = CTP + ADP + phosphate + 2 H(+). The protein operates within pyrimidine metabolism; CTP biosynthesis via de novo pathway; CTP from UDP: step 2/2. Allosterically activated by GTP, when glutamine is the substrate; GTP has no effect on the reaction when ammonia is the substrate. The allosteric effector GTP functions by stabilizing the protein conformation that binds the tetrahedral intermediate(s) formed during glutamine hydrolysis. Inhibited by the product CTP, via allosteric rather than competitive inhibition. Its function is as follows. Catalyzes the ATP-dependent amination of UTP to CTP with either L-glutamine or ammonia as the source of nitrogen. Regulates intracellular CTP levels through interactions with the four ribonucleotide triphosphates. The protein is CTP synthase of Methanococcoides burtonii (strain DSM 6242 / NBRC 107633 / OCM 468 / ACE-M).